The chain runs to 490 residues: Bifunctional pantoate ligase/cytidylate kinase (490 aa).

1 to 8 (MGGLHQGH) contributes to the ATP binding site. Positions 1-253 (MGGLHQGHAR…CGETRLIDHV (253 aa)) are pantoate--beta-alanine ligase. His-8 (proton donor) is an active-site residue. (R)-pantoate is bound at residue Gln-35. Residue Gln-35 participates in beta-alanine binding. 124–127 (GEKD) is a binding site for ATP. Residue Gln-130 coordinates (R)-pantoate. Residues Val-153 and 161–164 (ASSR) contribute to the ATP site. Positions 254 to 490 (FIMTRSPIVA…AKEIWPTPQG (237 aa)) are cytidylate kinase.

In the N-terminal section; belongs to the pantothenate synthetase family. This sequence in the C-terminal section; belongs to the cytidylate kinase family. Type 1 subfamily.

It is found in the cytoplasm. It carries out the reaction (R)-pantoate + beta-alanine + ATP = (R)-pantothenate + AMP + diphosphate + H(+). The catalysed reaction is CMP + ATP = CDP + ADP. The enzyme catalyses dCMP + ATP = dCDP + ADP. It functions in the pathway cofactor biosynthesis; (R)-pantothenate biosynthesis; (R)-pantothenate from (R)-pantoate and beta-alanine: step 1/1. Functionally, catalyzes the condensation of pantoate with beta-alanine in an ATP-dependent reaction via a pantoyl-adenylate intermediate. Its function is as follows. Catalyzes the transfer of a phosphate group from ATP to either CMP or dCMP to form CDP or dCDP and ADP, respectively. This chain is Bifunctional pantoate ligase/cytidylate kinase, found in Synechococcus sp. (strain WH7803).